The sequence spans 64 residues: Large ribosomal subunit protein bL35 (64 aa).

Composition is skewed to basic residues over residues 1–15 and 27–42; these read MPKN…KRFK and AGKR…KKTR. A disordered region spans residues 1 to 45; the sequence is MPKNKTHSGASKRFKITGSGKVLRERAGKRHLLEHKSSKKTRSLT.

This sequence belongs to the bacterial ribosomal protein bL35 family.

The polypeptide is Large ribosomal subunit protein bL35 (Streptomyces griseus subsp. griseus (strain JCM 4626 / CBS 651.72 / NBRC 13350 / KCC S-0626 / ISP 5235)).